The sequence spans 615 residues: Nuclear cap-binding protein subunit 3 (615 aa).

Lys-12 participates in a covalent cross-link: Glycyl lysine isopeptide (Lys-Gly) (interchain with G-Cter in SUMO2). The segment covering 15–27 has biased composition (low complexity); it reads APAGPALGLPSPE. The disordered stretch occupies residues 15-43; sequence APAGPALGLPSPEVESGLERGEPEPMEVE. Ser-25 carries the phosphoserine modification. Residue Lys-70 forms a Glycyl lysine isopeptide (Lys-Gly) (interchain with G-Cter in SUMO2) linkage. Ser-73 bears the Phosphoserine mark. The tract at residues 126–187 is RNA recognition motif (RRM) domain; that stretch reads ETIYICGVDE…MSSLPAQDKM (62 aa). The WLDD motif; essential for 7-methylguanosine-containing mRNA cap binding signature appears at 155–158; it reads WLDD. Disordered regions lie at residues 182–233 and 332–400; these read PAQD…LDTL and HSGL…MDYD. Residues 185-208 are compositionally biased toward basic and acidic residues; sequence DKMRSRDASEDKSSEKNKKDKQED. Lys-186 participates in a covalent cross-link: Glycyl lysine isopeptide (Lys-Gly) (interchain with G-Cter in SUMO2). Phosphoserine is present on residues Ser-209 and Ser-210. Acidic residues-rich tracts occupy residues 209-230 and 341-360; these read SSDD…DVEL and EPIE…DMDA. Residues 361–383 show a composition bias toward basic and acidic residues; the sequence is DDRVVVEYHEELPGLKQPRERSL. The residue at position 408 (Thr-408) is a Phosphothreonine. The residue at position 410 (Ser-410) is a Phosphoserine. Disordered regions lie at residues 430-454 and 467-615; these read SIRN…NKLP and EKRQ…EAES. Positions 506-516 are enriched in basic and acidic residues; that stretch reads VRREPSSDVHS. Residue Lys-536 forms a Glycyl lysine isopeptide (Lys-Gly) (interchain with G-Cter in SUMO2) linkage. Basic and acidic residues-rich tracts occupy residues 549 to 564 and 580 to 593; these read KTKE…RASG and IKEK…KSRL. Ser-563 is modified (phosphoserine). The segment covering 606-615 has biased composition (low complexity); it reads ESSSGSEAES. Ser-615 is subject to Phosphoserine.

The protein belongs to the NCBP3 family. As to quaternary structure, component of an alternative cap-binding complex (CBC) composed of NCBP1/CBP80 and NCBP3. Interacts with SRRT, KPNA3, THOC5 and EIF4A3.

The protein localises to the nucleus. The protein resides in the cytoplasm. Functionally, associates with NCBP1/CBP80 to form an alternative cap-binding complex (CBC) which plays a key role in mRNA export. NCBP3 serves as adapter protein linking the capped RNAs (m7GpppG-capped RNA) to NCBP1/CBP80. Unlike the conventional CBC with NCBP2 which binds both small nuclear RNA (snRNA) and messenger (mRNA) and is involved in their export from the nucleus, the alternative CBC with NCBP3 does not bind snRNA and associates only with mRNA thereby playing a role in only mRNA export. The alternative CBC is particularly important in cellular stress situations such as virus infections and the NCBP3 activity is critical to inhibit virus growth. This Mus musculus (Mouse) protein is Nuclear cap-binding protein subunit 3.